Consider the following 499-residue polypeptide: Potassium voltage-gated channel subfamily A member 2 (499 aa).

The tract at residues Met-1–Glu-26 is disordered. A tetramerization domain region spans residues Met-1–Met-125. Topologically, residues Met-1–Gly-160 are cytoplasmic. A helical transmembrane segment spans residues Pro-161–Leu-182. At Glu-183 to Pro-221 the chain is on the extracellular side. A glycan (N-linked (GlcNAc...) asparagine) is linked at Asn-207. A helical transmembrane segment spans residues Phe-222–Ala-243. Cys-244 carries the S-palmitoyl cysteine lipid modification. At Cys-244 to Ile-254 the chain is on the cytoplasmic side. Residues Met-255–Ala-275 form a helical membrane-spanning segment. The Extracellular portion of the chain corresponds to Glu-276–Ser-289. Residues Leu-290 to His-310 form a helical; Voltage-sensor membrane-spanning segment. Topologically, residues Ser-311–Met-325 are cytoplasmic. Positions Lys-312 to Met-325 are S4-S5 linker. The chain crosses the membrane as a helical span at residues Arg-326–Tyr-347. Over Phe-348–Ile-361 the chain is Extracellular. An intramembrane region (helical) is located at residues Pro-362–Thr-373. The short motif at Thr-374–Asp-379 is the Selectivity filter element. Residues Thr-374–Val-381 lie within the membrane without spanning it. Topologically, residues Pro-382–Lys-388 are extracellular. Residues Ile-389–Tyr-417 traverse the membrane as a helical segment. The Cytoplasmic segment spans residues His-418–Val-499. At Tyr-429 the chain carries Phosphotyrosine. Ser-434, Ser-440, Ser-441, and Ser-449 each carry phosphoserine. Residue Tyr-458 is modified to Phosphotyrosine. Residue Ser-468 is modified to Phosphoserine. The PDZ-binding motif lies at Thr-497–Val-499.

It belongs to the potassium channel family. A (Shaker) (TC 1.A.1.2) subfamily. Kv1.2/KCNA2 sub-subfamily. Homotetramer and heterotetramer with other channel-forming alpha subunits, such as KCNA1, KCNA4, KCNA5, KCNA6 and KCNA7. Channel activity is regulated by interaction with beta subunits, including KCNAB1 and KCNAB2. Identified in a complex with KCNA1 and KCNAB2. Identified in a complex with KCNA5 and KCNAB1. Identified in a complex with KCNA4 and FYN. Interacts with PTK2B. Interacts (via C-terminus) with CTTN. Interacts with ADAM22. Interacts with CNTNAP2. Interacts (via C-terminus) with the PDZ domains of DLG1, DLG2 and DLG4. Interacts (via N-terminal cytoplasmic domain) with RHOA (GTP-bound form); this regulates channel activity by reducing location at the cell surface in response to CHRM1 activation. Interacts with DRD2. Interacts with SIGMAR1; cocaine consumption leads to increased interaction. Interacts with ADAM11. Interacts with LYNX1. In terms of processing, phosphorylated on tyrosine residues; phosphorylation increases in response to ischemia. Phosphorylated on tyrosine residues by activated PTK2B/PYK2. Phosphorylation on tyrosine residues suppresses ion channel activity. Phosphorylated on tyrosine residues in response to CHRM1 activation; this abolishes interaction with CTTN. This is probably due to endocytosis of the phosphorylated channel subunits. Phosphorylated on serine residues in response to increased cAMP levels; phosphorylation is apparently not catalyzed by PKA. Post-translationally, N-glycosylated, with complex, sialylated N-glycans. In terms of tissue distribution, detected in brain. Detected in cerebellum. Detected in mitral cells in the olfactory bulb. Detected in cochlea. Detected in cerebellum, particularly in the basket cell axon plexus and in the terminal regions around Purkinje cells (at protein level). Detected in juxtaparanodal regions in sciatic nerve. Detected in Schwann cells from sciatic nerve. Detected in dopamine neurons in substantia nigra. Detected in large myelinated fibers in juxtaparanodes in the CA3 and CA1 areas of the hippocampus. Detected in brain, in punctae on fiber tracts in brain stem and spinal cord, and on axons in the juxtaparanodal regions of the node of Ranvier (at protein level). Detected in dopamine neurons in the midbrain.

The protein resides in the cell membrane. It localises to the membrane. It is found in the cell projection. The protein localises to the axon. Its subcellular location is the synapse. The protein resides in the endoplasmic reticulum membrane. It localises to the lamellipodium membrane. It is found in the synaptosome. The protein localises to the presynaptic cell membrane. Its subcellular location is the dendrite. The protein resides in the perikaryon. It localises to the cell junction. It is found in the paranodal septate junction. The enzyme catalyses K(+)(in) = K(+)(out). With respect to regulation, inhibited by 4-aminopyridine (4-AP), dendrotoxin (DTX) and charybdotoxin (CTX), but not by tetraethylammonium (TEA). Inhibited by tityustoxin-K alpha (TsTX-Kalpha), a toxin that is highly specific for KCNA2. Inhibited by maurotoxin. Inhibited by kappaM conotoxins kappaM-RIIIJ and kappaM-RIIIK. Its function is as follows. Voltage-gated potassium channel that mediates transmembrane potassium transport in excitable membranes, primarily in the brain and the central nervous system, but also in the cardiovascular system. Prevents aberrant action potential firing and regulates neuronal output. Forms tetrameric potassium-selective channels through which potassium ions pass in accordance with their electrochemical gradient. The channel alternates between opened and closed conformations in response to the voltage difference across the membrane. Can form functional homotetrameric channels and heterotetrameric channels that contain variable proportions of KCNA1, KCNA2, KCNA4, KCNA5, KCNA6, KCNA7, and possibly other family members as well; channel properties depend on the type of alpha subunits that are part of the channel. Channel properties are modulated by cytoplasmic beta subunits that regulate the subcellular location of the alpha subunits and promote rapid inactivation of delayed rectifier potassium channels. In vivo, membranes probably contain a mixture of heteromeric potassium channel complexes, making it difficult to assign currents observed in intact tissues to any particular potassium channel family member. Homotetrameric KCNA2 forms a delayed-rectifier potassium channel that opens in response to membrane depolarization, followed by slow spontaneous channel closure. In contrast, a heteromultimer formed by KCNA2 and KCNA4 shows rapid inactivation. Contributes to the regulation of action potentials in neurons. KCNA2-containing channels play a presynaptic role and prevent hyperexcitability and aberrant action potential firing. Response to toxins that are selective for KCNA1, respectively for KCNA2, suggests that heteromeric potassium channels composed of both KCNA1 and KCNA2 play a role in pacemaking and regulate the output of deep cerebellar nuclear neurons. Response to toxins that are selective for KCNA2-containing potassium channels suggests that in Purkinje cells, dendritic subthreshold KCNA2-containing potassium channels prevent random spontaneous calcium spikes, suppressing dendritic hyperexcitability without hindering the generation of somatic action potentials, and thereby play an important role in motor coordination. KCNA2-containing channels play a role in GABAergic transmission from basket cells to Purkinje cells in the cerebellum, and thereby play an import role in motor coordination. Plays a role in the induction of long-term potentiation of neuron excitability in the CA3 layer of the hippocampus. May function as down-stream effector for G protein-coupled receptors and inhibit GABAergic inputs to basolateral amygdala neurons. May contribute to the regulation of neurotransmitter release, such as gamma-aminobutyric acid (GABA). Contributes to the regulation of the axonal release of the neurotransmitter dopamine. Reduced KCNA2 expression plays a role in the perception of neuropathic pain after peripheral nerve injury, but not acute pain. Plays a role in the regulation of the time spent in non-rapid eye movement (NREM) sleep. The protein is Potassium voltage-gated channel subfamily A member 2 (Kcna2) of Mus musculus (Mouse).